Reading from the N-terminus, the 312-residue chain is Ribosomal RNA small subunit methyltransferase H (312 aa).

S-adenosyl-L-methionine contacts are provided by residues 33–35 (AGH), Asp-53, Phe-79, Asp-100, and Gln-107.

Belongs to the methyltransferase superfamily. RsmH family.

It localises to the cytoplasm. The catalysed reaction is cytidine(1402) in 16S rRNA + S-adenosyl-L-methionine = N(4)-methylcytidine(1402) in 16S rRNA + S-adenosyl-L-homocysteine + H(+). Its function is as follows. Specifically methylates the N4 position of cytidine in position 1402 (C1402) of 16S rRNA. In Clostridium acetobutylicum (strain ATCC 824 / DSM 792 / JCM 1419 / IAM 19013 / LMG 5710 / NBRC 13948 / NRRL B-527 / VKM B-1787 / 2291 / W), this protein is Ribosomal RNA small subunit methyltransferase H.